A 591-amino-acid chain; its full sequence is Formate--tetrahydrofolate ligase (591 aa).

74–81 provides a ligand contact to ATP; it reads TPLGEGKS.

It belongs to the formate--tetrahydrofolate ligase family.

The catalysed reaction is (6S)-5,6,7,8-tetrahydrofolate + formate + ATP = (6R)-10-formyltetrahydrofolate + ADP + phosphate. Its pathway is one-carbon metabolism; tetrahydrofolate interconversion. This is Formate--tetrahydrofolate ligase from Lawsonia intracellularis (strain PHE/MN1-00).